The following is a 103-amino-acid chain: UPF0091 protein PH0944 (103 aa).

The protein belongs to the UPF0091 family.

The chain is UPF0091 protein PH0944 from Pyrococcus horikoshii (strain ATCC 700860 / DSM 12428 / JCM 9974 / NBRC 100139 / OT-3).